The following is a 548-amino-acid chain: Membrane protein insertase YidC (548 aa).

A helical membrane pass occupies residues 6-26; sequence NLLVIALLFVSFMIWQAWEQD. The disordered stretch occupies residues 28–56; sequence NPQPQTQQTTQTTTTAAGSAADQGVPASG. Over residues 29–42 the composition is skewed to low complexity; sequence PQPQTQQTTQTTTT. The next 4 helical transmembrane spans lie at 350–370, 424–444, 458–478, and 499–519; these read FVGNWGFSIIIITFIVRGIMY, FPLIIQMPIFLALYYMLMGSI, LSAQDPYYILPILMGVTMFFI, and PVIFTVFFLWFPSGLVLYYIV.

It belongs to the OXA1/ALB3/YidC family. Type 1 subfamily. In terms of assembly, interacts with the Sec translocase complex via SecD. Specifically interacts with transmembrane segments of nascent integral membrane proteins during membrane integration.

It is found in the cell inner membrane. Required for the insertion and/or proper folding and/or complex formation of integral membrane proteins into the membrane. Involved in integration of membrane proteins that insert both dependently and independently of the Sec translocase complex, as well as at least some lipoproteins. Aids folding of multispanning membrane proteins. The chain is Membrane protein insertase YidC from Salmonella enteritidis PT4 (strain P125109).